The primary structure comprises 429 residues: MSRNQQLFDRAQQTIPGGVNSPVRAFRSVGGTPRFITCAEGAYMWDADGQRYIDYIGSWGPMIVGHAHPDVVRAVQETAAHSFSFGAPTEAEIDMAEEICKLVPSIEQVRLVSSGTEATMSALRLARGFTGRDLIIKFEGCYHGHADSLLVKAGSGLLTFADTTQNAPSSAGVPADVTRHTMVLEYNNVAQLEEAFAQHRGEIAAVIVEVVAGNMNLVRASDAFLKAMRELCTRDGAVLIFDEVMTGFRVALGGAQSHYGITPDMTCLGKVIGGGMPAAAFGGRRDIMAKLAPLGGVYQAGTLSGNPLAVAAGLTTLRLIQAPGFYDKLTAQTRKLADGLSEAARAAGVPFAADAIGGMFGIYFRDGVPGSFAEVTKSDTARFNRFFHAMLDNGVYLAPSAFEAGFVSACHDDAILQATLDAARKAFAA.

Lysine 270 is subject to N6-(pyridoxal phosphate)lysine.

Belongs to the class-III pyridoxal-phosphate-dependent aminotransferase family. HemL subfamily. Homodimer. Pyridoxal 5'-phosphate is required as a cofactor.

It is found in the cytoplasm. The enzyme catalyses (S)-4-amino-5-oxopentanoate = 5-aminolevulinate. It functions in the pathway porphyrin-containing compound metabolism; protoporphyrin-IX biosynthesis; 5-aminolevulinate from L-glutamyl-tRNA(Glu): step 2/2. The protein is Glutamate-1-semialdehyde 2,1-aminomutase of Cupriavidus pinatubonensis (strain JMP 134 / LMG 1197) (Cupriavidus necator (strain JMP 134)).